A 198-amino-acid polypeptide reads, in one-letter code: FMN-dependent NADH:quinone oxidoreductase (198 aa).

Residues 92–95 and 136–139 contribute to the FMN site; these read MWNL and SRGG.

The protein belongs to the azoreductase type 1 family. In terms of assembly, homodimer. It depends on FMN as a cofactor.

The catalysed reaction is 2 a quinone + NADH + H(+) = 2 a 1,4-benzosemiquinone + NAD(+). The enzyme catalyses N,N-dimethyl-1,4-phenylenediamine + anthranilate + 2 NAD(+) = 2-(4-dimethylaminophenyl)diazenylbenzoate + 2 NADH + 2 H(+). In terms of biological role, quinone reductase that provides resistance to thiol-specific stress caused by electrophilic quinones. Functionally, also exhibits azoreductase activity. Catalyzes the reductive cleavage of the azo bond in aromatic azo compounds to the corresponding amines. The polypeptide is FMN-dependent NADH:quinone oxidoreductase (Clostridium perfringens (strain ATCC 13124 / DSM 756 / JCM 1290 / NCIMB 6125 / NCTC 8237 / Type A)).